The sequence spans 370 residues: ADP-ribosylation factor-like protein 13B (370 aa).

4 S-palmitoyl cysteine lipidation sites follow: Cys12, Cys13, Cys14, and Cys15. GTP-binding positions include 31-38 (GIGSAGKT), 75-79 (DVGGD), and 134-137 (NNQN). Lys239 participates in a covalent cross-link: Glycyl lysine isopeptide (Lys-Gly) (interchain with G-Cter in SUMO). The disordered stretch occupies residues 255–331 (RNQPPVQPPI…PVSPESNSVK (77 aa)). The segment covering 259–271 (PVQPPIPPDPPSD) has biased composition (pro residues). 2 stretches are compositionally biased toward polar residues: residues 287 to 303 (LASSTIPSDIIQSTPET) and 314 to 328 (RISQTSTKPVSPESN). Lys331 participates in a covalent cross-link: Glycyl lysine isopeptide (Lys-Gly) (interchain with G-Cter in SUMO). Positions 366–369 (RVVP) are RVVP region.

It belongs to the small GTPase superfamily. Arf family. As to quaternary structure, monomer. In terms of processing, sumoylation regulates the targeting of membrane sensory receptors to the cilium. Specifically expressed in ciliated sensory neurons throughout development in both hermaphrodites.

Its subcellular location is the cell projection. It is found in the cilium membrane. Functionally, cilium-specific protein required to control the microtubule-based, ciliary axoneme structure. Required for normal sensory cilium function. May act by maintaining the association between IFT subcomplexes A and B. This Caenorhabditis elegans protein is ADP-ribosylation factor-like protein 13B (arl-13).